Consider the following 307-residue polypeptide: UDP-3-O-acyl-N-acetylglucosamine deacetylase (307 aa).

Residues histidine 78, histidine 241, and aspartate 245 each contribute to the Zn(2+) site. The active-site Proton donor is the histidine 268.

This sequence belongs to the LpxC family. Zn(2+) is required as a cofactor.

The enzyme catalyses a UDP-3-O-[(3R)-3-hydroxyacyl]-N-acetyl-alpha-D-glucosamine + H2O = a UDP-3-O-[(3R)-3-hydroxyacyl]-alpha-D-glucosamine + acetate. It functions in the pathway glycolipid biosynthesis; lipid IV(A) biosynthesis; lipid IV(A) from (3R)-3-hydroxytetradecanoyl-[acyl-carrier-protein] and UDP-N-acetyl-alpha-D-glucosamine: step 2/6. Its function is as follows. Catalyzes the hydrolysis of UDP-3-O-myristoyl-N-acetylglucosamine to form UDP-3-O-myristoylglucosamine and acetate, the committed step in lipid A biosynthesis. This is UDP-3-O-acyl-N-acetylglucosamine deacetylase from Bordetella bronchiseptica (strain ATCC BAA-588 / NCTC 13252 / RB50) (Alcaligenes bronchisepticus).